The chain runs to 177 residues: Translation initiation factor IF-3 (177 aa).

The protein belongs to the IF-3 family. In terms of assembly, monomer.

It is found in the cytoplasm. Its function is as follows. IF-3 binds to the 30S ribosomal subunit and shifts the equilibrium between 70S ribosomes and their 50S and 30S subunits in favor of the free subunits, thus enhancing the availability of 30S subunits on which protein synthesis initiation begins. The chain is Translation initiation factor IF-3 from Acaryochloris marina (strain MBIC 11017).